Here is a 301-residue protein sequence, read N- to C-terminus: 4-hydroxy-tetrahydrodipicolinate synthase (301 aa).

Residue T53 participates in pyruvate binding. Y142 functions as the Proton donor/acceptor in the catalytic mechanism. Residue K170 is the Schiff-base intermediate with substrate of the active site. Residue V212 participates in pyruvate binding.

It belongs to the DapA family. Homotetramer; dimer of dimers.

The protein localises to the cytoplasm. The enzyme catalyses L-aspartate 4-semialdehyde + pyruvate = (2S,4S)-4-hydroxy-2,3,4,5-tetrahydrodipicolinate + H2O + H(+). It participates in amino-acid biosynthesis; L-lysine biosynthesis via DAP pathway; (S)-tetrahydrodipicolinate from L-aspartate: step 3/4. Its function is as follows. Catalyzes the condensation of (S)-aspartate-beta-semialdehyde [(S)-ASA] and pyruvate to 4-hydroxy-tetrahydrodipicolinate (HTPA). This Synechocystis sp. (strain ATCC 27184 / PCC 6803 / Kazusa) protein is 4-hydroxy-tetrahydrodipicolinate synthase.